We begin with the raw amino-acid sequence, 396 residues long: Elongation factor Tu (396 aa).

The tr-type G domain maps to 11-205; it reads KPHVNIGTIG…TVDEYIPTPE (195 aa). Positions 20-27 are G1; the sequence is GHVDHGKT. 20–27 contacts GTP; it reads GHVDHGKT. Mg(2+) is bound at residue Thr-27. The G2 stretch occupies residues 61-65; it reads GITIN. A G3 region spans residues 82-85; the sequence is DAPG. GTP-binding positions include 82-86 and 137-140; these read DAPGH and NKVD. The G4 stretch occupies residues 137-140; it reads NKVD. A G5 region spans residues 175 to 177; the sequence is SAL.

It belongs to the TRAFAC class translation factor GTPase superfamily. Classic translation factor GTPase family. EF-Tu/EF-1A subfamily. As to quaternary structure, monomer.

It is found in the cytoplasm. The catalysed reaction is GTP + H2O = GDP + phosphate + H(+). In terms of biological role, GTP hydrolase that promotes the GTP-dependent binding of aminoacyl-tRNA to the A-site of ribosomes during protein biosynthesis. This chain is Elongation factor Tu, found in Lactobacillus gasseri (strain ATCC 33323 / DSM 20243 / BCRC 14619 / CIP 102991 / JCM 1131 / KCTC 3163 / NCIMB 11718 / NCTC 13722 / AM63).